The chain runs to 501 residues: Calcium-dependent protein kinase 4 (501 aa).

The Protein kinase domain occupies 25-283 (YLLGKKLGQG…AHEALCHPWI (259 aa)). ATP contacts are provided by residues 31–39 (LGQGQFGTT) and K54. Catalysis depends on D149, which acts as the Proton acceptor. S189 carries the post-translational modification Phosphoserine. Residues 289-319 (APDKPLDPAVLSRLKQFSQMNKIKKMALRVI) are autoinhibitory domain. 4 EF-hand domains span residues 326–361 (EEIG…VGSE), 362–397 (LMES…INKM), 398–433 (EREE…FGLC), and 437–467 (LDDM…GDGV). Ca(2+)-binding residues include D339, D341, S343, T345, E350, D375, D377, S379, T381, E386, D411, D413, S415, Y417, E422, D445, D447, D449, K451, and E456.

Belongs to the protein kinase superfamily. Ser/Thr protein kinase family. CDPK subfamily. Interacts with Di19.

It localises to the cytoplasm. The protein localises to the nucleus. The catalysed reaction is L-seryl-[protein] + ATP = O-phospho-L-seryl-[protein] + ADP + H(+). It catalyses the reaction L-threonyl-[protein] + ATP = O-phospho-L-threonyl-[protein] + ADP + H(+). With respect to regulation, activated by calcium. Autophosphorylation may play an important role in the regulation of the kinase activity. In terms of biological role, may play a role in signal transduction pathways that involve calcium as a second messenger. Functions as a regulator of the calcium-mediated abscisic acid (ABA) signaling pathway. Phosphorylates ABA-responsive transcription factors ABF1 and ABF4 in vitro. Phosphorylates the nuclear zinc finger Di19 in vitro. The sequence is that of Calcium-dependent protein kinase 4 (CPK4) from Arabidopsis thaliana (Mouse-ear cress).